An 84-amino-acid chain; its full sequence is Large ribosomal subunit protein bL31B-2 (84 aa).

The protein belongs to the bacterial ribosomal protein bL31 family. Type B subfamily. In terms of assembly, part of the 50S ribosomal subunit.

The sequence is that of Large ribosomal subunit protein bL31B-2 from Streptomyces coelicolor (strain ATCC BAA-471 / A3(2) / M145).